We begin with the raw amino-acid sequence, 334 residues long: CRISPR-associated endonuclease Cas1 (334 aa).

Residues E161, H226, and E241 each contribute to the Mn(2+) site.

This sequence belongs to the CRISPR-associated endonuclease Cas1 family. As to quaternary structure, homodimer, forms a heterotetramer with a Cas2 homodimer. It depends on Mg(2+) as a cofactor. Mn(2+) is required as a cofactor.

CRISPR (clustered regularly interspaced short palindromic repeat), is an adaptive immune system that provides protection against mobile genetic elements (viruses, transposable elements and conjugative plasmids). CRISPR clusters contain spacers, sequences complementary to antecedent mobile elements, and target invading nucleic acids. CRISPR clusters are transcribed and processed into CRISPR RNA (crRNA). Acts as a dsDNA endonuclease. Involved in the integration of spacer DNA into the CRISPR cassette. In Methanothermobacter thermautotrophicus (strain ATCC 29096 / DSM 1053 / JCM 10044 / NBRC 100330 / Delta H) (Methanobacterium thermoautotrophicum), this protein is CRISPR-associated endonuclease Cas1.